The following is a 276-amino-acid chain: Small ribosomal subunit protein uS3 (276 aa).

One can recognise a KH type-2 domain in the interval 39–110 (IRRETMKFFK…KINIKIKEIK (72 aa)). Residues 218 to 243 (DAGQVINRKSSREKSEHFDRSRVDDR) are disordered. Over residues 227–243 (SSREKSEHFDRSRVDDR) the composition is skewed to basic and acidic residues.

The protein belongs to the universal ribosomal protein uS3 family. In terms of assembly, part of the 30S ribosomal subunit. Forms a tight complex with proteins S10 and S14.

In terms of biological role, binds the lower part of the 30S subunit head. Binds mRNA in the 70S ribosome, positioning it for translation. This chain is Small ribosomal subunit protein uS3, found in Borrelia hermsii (strain HS1 / DAH).